Consider the following 128-residue polypeptide: Large ribosomal subunit protein bL19 (128 aa).

Belongs to the bacterial ribosomal protein bL19 family.

Its function is as follows. This protein is located at the 30S-50S ribosomal subunit interface and may play a role in the structure and function of the aminoacyl-tRNA binding site. This Janthinobacterium sp. (strain Marseille) (Minibacterium massiliensis) protein is Large ribosomal subunit protein bL19.